A 359-amino-acid polypeptide reads, in one-letter code: 4-galactosyl-N-acetylglucosaminide 3-alpha-L-fucosyltransferase FUT6 (359 aa).

The Cytoplasmic segment spans residues 1-14 (MDPLGPAKTQWSWR). A helical; Signal-anchor for type II membrane protein membrane pass occupies residues 15-34 (CCLTALLFQLLVAVCFFSYL). The Lumenal segment spans residues 35–359 (RVSRDDPTVY…QTRSIAAWFT (325 aa)). Residues 73-112 (KPIALPRCSEMVPGTADCNITADRKVYPQADAVIVHHREV) form a determines site-specific fucosylation region. 3 N-linked (GlcNAc...) asparagine glycosylation sites follow: Asn91, Asn153, and Asn184.

This sequence belongs to the glycosyltransferase 10 family. Homodimer and monomer. Monomer (secreted form). N-glycosylated. In terms of processing, proteolytic cleavage releases a secreted glycoform of 43 kDa.

It localises to the golgi apparatus. Its subcellular location is the golgi stack membrane. The protein localises to the secreted. The enzyme catalyses a beta-D-galactosyl-(1-&gt;4)-N-acetyl-beta-D-glucosaminyl derivative + GDP-beta-L-fucose = a beta-D-galactosyl-(1-&gt;4)-[alpha-L-fucosyl-(1-&gt;3)]-N-acetyl-beta-D-glucosaminyl derivative + GDP + H(+). The catalysed reaction is an N-acetyl-alpha-neuraminyl-(2-&gt;3)-beta-D-galactosyl-(1-&gt;4)-N-acetyl-beta-D-glucosaminyl derivative + GDP-beta-L-fucose = an alpha-Neu5Ac-(2-&gt;3)-beta-D-Gal-(1-&gt;4)-[alpha-L-Fuc-(1-&gt;3)]-beta-D-GlcNAc derivative + GDP + H(+). It carries out the reaction an alpha-Neu5Ac-(2-&gt;3)-beta-D-Gal-(1-&gt;4)-beta-D-GlcNAc-(1-&gt;3)-beta-D-Gal-(1-&gt;4)-[alpha-L-Fuc-(1-&gt;3)]-beta-D-GlcNAc derivative + GDP-beta-L-fucose = an alpha-Neu5Ac-(2-&gt;3)-beta-D-Gal-(1-&gt;4)-[alpha-L-Fuc-(1-&gt;3)]-beta-D-GlcNAc-(1-&gt;3)-beta-D-Gal-(1-&gt;4)-[alpha-L-Fuc-(1-&gt;3)]-beta-D-GlcNAc derivative + GDP + H(+). It catalyses the reaction a neolactoside nLc6Cer + GDP-beta-L-fucose = beta-D-Gal-(1-&gt;4)-[alpha-L-Fuc-(1-&gt;3)]-beta-D-GlcNAc-(1-&gt;3)-beta-D-Gal-(1-&gt;4)-beta-D-GlcNAc-(1-&gt;3)-beta-D-Gal-(1-&gt;4)-beta-D-Glc-(1&lt;-&gt;1')-Cer + GDP + H(+). The enzyme catalyses a neolactoside nLc6Cer + GDP-beta-L-fucose = beta-D-galactosyl-(1-&gt;4)-N-acetyl-beta-D-glucosaminyl-(1-&gt;3)-beta-D-galactosyl-(1-&gt;4)-[alpha-L-fucosyl-(1-&gt;3)]-N-acetyl-beta-D-glucosaminyl-(1-&gt;3)-beta-D-galactosyl-(1-&gt;4)-beta-D-glucosyl-(1&lt;-&gt;1')-ceramide + GDP + H(+). The catalysed reaction is a neolactoside VI(3)-alpha-NeuNAc-nLc6Cer + GDP-beta-L-fucose = a neolactoside VI(3)-alpha-NeuAc,V(3)-alphaFuc-nLc6Cer + GDP + H(+). It carries out the reaction beta-D-galactosyl-(1-&gt;4)-N-acetyl-D-glucosamine + GDP-beta-L-fucose = beta-D-galactosyl-(1-&gt;4)-[alpha-L-fucosyl-(1-&gt;3)]-N-acetyl-D-glucosamine + GDP + H(+). It catalyses the reaction N-acetyl-alpha-neuraminosyl-(2-&gt;3)-beta-D-galactosyl-(1-&gt;4)-N-acetyl-beta-D-glucosamine + GDP-beta-L-fucose = N-acetyl-alpha-neuraminosyl-(2-&gt;3)-beta-D-galactosyl-(1-&gt;4)-[alpha-L-fucosyl-(1-&gt;3)]-N-acetyl-beta-D-glucosamine + GDP + H(+). The enzyme catalyses lactose + GDP-beta-L-fucose = beta-D-galactosyl-(1-&gt;4)-[alpha-L-fucosyl-(1-&gt;3)]-D-glucose + GDP + H(+). The catalysed reaction is alpha-L-Fuc-(1-&gt;2)-beta-D-Gal-(1-&gt;4)-D-Glc + GDP-beta-L-fucose = alpha-L-Fuc-(1-&gt;2)-beta-D-Gal-(1-&gt;4)-[alpha-L-Fuc-(1-&gt;3)]-D-Glc + GDP + H(+). It carries out the reaction a beta-D-galactosyl-(1-&gt;4)-N-acetyl-beta-D-6-sulfooxy-glucosaminyl derivative + GDP-beta-L-fucose = a beta-D-galactosyl-(1-&gt;4)-[alpha-L-fucosyl-(1-&gt;3)]-N-acetyl-beta-D-6-sulfooxy-glucosaminyl derivative + GDP + H(+). Its pathway is protein modification; protein glycosylation. Functionally, catalyzes the transfer of L-fucose, from a guanosine diphosphate-beta-L-fucose, to the N-acetyl glucosamine (GlcNAc) of a distal alpha2,3 sialylated lactosamine unit of a glycoprotein- or glycolipid-linked sialopolylactosamines chain or of a distal or internal lactosamine unit of a neutral glycoprotein- or glycolipid-linked polylactosamines chain through an alpha-1,3 glycosidic linkage and participates in surface expression of the sialyl Lewis X (sLe(x)), Lewis X (Le(x)) and non sialylated VIM2 determinants. Moreover transfers fucose to H-type 2 (Fucalpha1-2Galbeta1-4GlcNAc) chain acceptor substrates and participates in difucosylated sialyl Lewis x determinants. Also fucosylates a polylactosamine substrate having a 6 sulfate modification at the GlcNAc moiety and gives rise to sialyl and non-sialyl 6-sulfo lewis X. Does not have activity towards type 1 ((Galbeta1-3GlcNAc)) and H-type 1 chain (Fucalpha1-2Galbeta1-3GlcNAc) acceptors substrates. This is 4-galactosyl-N-acetylglucosaminide 3-alpha-L-fucosyltransferase FUT6 from Pongo pygmaeus (Bornean orangutan).